A 208-amino-acid chain; its full sequence is Large ribosomal subunit protein uL4 (208 aa).

The tract at residues 44–76 (RRQGTQSTKTKSEVRGGGRKPWRQKGTGRARHG) is disordered. A compositionally biased stretch (basic residues) spans 60-76 (GGRKPWRQKGTGRARHG).

It belongs to the universal ribosomal protein uL4 family. Part of the 50S ribosomal subunit.

In terms of biological role, one of the primary rRNA binding proteins, this protein initially binds near the 5'-end of the 23S rRNA. It is important during the early stages of 50S assembly. It makes multiple contacts with different domains of the 23S rRNA in the assembled 50S subunit and ribosome. Functionally, forms part of the polypeptide exit tunnel. The chain is Large ribosomal subunit protein uL4 from Acetivibrio thermocellus (strain ATCC 27405 / DSM 1237 / JCM 9322 / NBRC 103400 / NCIMB 10682 / NRRL B-4536 / VPI 7372) (Clostridium thermocellum).